We begin with the raw amino-acid sequence, 201 residues long: MEKFTTHTGVGVPLRASNVDTDQIIPAVYLKRISRTGFEDALFAGWRQDPDFILNTEPFSGGTVLVAGSDFGTGSSREHAVWALKDYGFRAVISPRFADIFRGNSAKQGLVAAQVEQEDVERIWKELENRPGTTVTVDLVTRTVECGDVTAPFQIDDDTRRRLLEGLDDIAVTLGHQAEIDAYEADRPAYKPTTLPARTAG.

This sequence belongs to the LeuD family. LeuD type 1 subfamily. Heterodimer of LeuC and LeuD.

It carries out the reaction (2R,3S)-3-isopropylmalate = (2S)-2-isopropylmalate. It functions in the pathway amino-acid biosynthesis; L-leucine biosynthesis; L-leucine from 3-methyl-2-oxobutanoate: step 2/4. In terms of biological role, catalyzes the isomerization between 2-isopropylmalate and 3-isopropylmalate, via the formation of 2-isopropylmaleate. The sequence is that of 3-isopropylmalate dehydratase small subunit from Micrococcus luteus (strain ATCC 4698 / DSM 20030 / JCM 1464 / CCM 169 / CCUG 5858 / IAM 1056 / NBRC 3333 / NCIMB 9278 / NCTC 2665 / VKM Ac-2230) (Micrococcus lysodeikticus).